Consider the following 285-residue polypeptide: HTH-type transcriptional regulator HexR (285 aa).

Residues 2–78 enclose the HTH rpiR-type domain; the sequence is KNLLEQIQSR…IQLAQSLASG (77 aa). Positions 38 to 57 form a DNA-binding region, H-T-H motif; the sequence is IAALAQAAAVSEPTVNRFCR. One can recognise an SIS domain in the interval 122–261; the sequence is AVDLLIQARQ…ATGVTLRRGV (140 aa).

In terms of biological role, involved in regulation of glucose metabolism. Transcriptional repressor of the gap-1 gene and of the edd-glk-gltR-2 and zwf-pgl-eda operons. Acts by binding directly to an inverted pseudopalindromic sequence in the promoter region. This Pseudomonas aeruginosa (strain ATCC 15692 / DSM 22644 / CIP 104116 / JCM 14847 / LMG 12228 / 1C / PRS 101 / PAO1) protein is HTH-type transcriptional regulator HexR.